A 114-amino-acid polypeptide reads, in one-letter code: Ribosome-binding factor A (114 aa).

This sequence belongs to the RbfA family. In terms of assembly, monomer. Binds 30S ribosomal subunits, but not 50S ribosomal subunits or 70S ribosomes.

Its subcellular location is the cytoplasm. Functionally, one of several proteins that assist in the late maturation steps of the functional core of the 30S ribosomal subunit. Associates with free 30S ribosomal subunits (but not with 30S subunits that are part of 70S ribosomes or polysomes). Required for efficient processing of 16S rRNA. May interact with the 5'-terminal helix region of 16S rRNA. This is Ribosome-binding factor A from Staphylococcus saprophyticus subsp. saprophyticus (strain ATCC 15305 / DSM 20229 / NCIMB 8711 / NCTC 7292 / S-41).